The sequence spans 644 residues: Forkhead box protein O (644 aa).

The tract at residues 39 to 75 (FEPQTRARSNTWPCPRPENFVEPPDELDSTKASNQQL) is disordered. Phosphothreonine; by PKB/AKT1 is present on Thr49. A Phosphoserine modification is found at Ser80. Residues 100-206 (WGNLSYADLI…ETSRYEKRRG (107 aa)) constitute a DNA-binding region (fork-head). Disordered regions lie at residues 187–210 (KSVRRRAASMETSRYEKRRGRAKK), 222–276 (GLND…SPIR), 329–386 (QQQQ…QTLQ), 412–435 (SPNSVTTTMSPAYPNSEPSSDSLN), and 578–612 (QQHLQQQQQHHQHQQQLLLNNNNNNNNNNSSNSSL). Position 195 is a phosphoserine; by PKB/AKT1 (Ser195). 2 stretches are compositionally biased toward polar residues: residues 226–235 (ATPSPSSSVS) and 261–270 (RASSNASSCG). Ser264 is subject to Phosphoserine; by PKB/AKT1. Phosphoserine occurs at positions 267, 268, and 273. Over residues 329 to 340 (QQQQQQQQQQQQ) the composition is skewed to low complexity. Positions 350-359 (SQPPPPPYQP) are enriched in pro residues. The segment covering 360–374 (PQLQQQQQQQPSYSL) has biased composition (low complexity). Residues 412 to 421 (SPNSVTTTMS) are compositionally biased toward polar residues.

Interacts with melt.

Its subcellular location is the cytoplasm. The protein resides in the nucleus. Transcription factor involved in the regulation of the insulin signaling pathway. Consistently activates both the downstream target Thor\d4EBP and the feedback control target InR. Involved in negative regulation of the cell cycle, modulating cell growth and proliferation. In response to cellular stresses, such as nutrient deprivation or increased levels of reactive oxygen species, foxo is activated and inhibits growth through the action of target genes such as Thor. Foxo activated in the adult fat body can regulate lifespan in adults; an insulin peptide itself may function as one secondary messenger of insulin-regulated aging. Also regulates Lip4, homolog of human acid lipases, thereby acting as a key modulator of lipid metabolism by insulin signaling and integrates insulin responses to glucose and lipid homeostasis. In Drosophila pseudoobscura pseudoobscura (Fruit fly), this protein is Forkhead box protein O.